A 161-amino-acid chain; its full sequence is Regulator of ribonuclease activity A (161 aa).

This sequence belongs to the RraA family. Homotrimer. Binds to both RNA-binding sites in the C-terminal region of Rne and to RhlB.

The protein resides in the cytoplasm. Globally modulates RNA abundance by binding to RNase E (Rne) and regulating its endonucleolytic activity. Can modulate Rne action in a substrate-dependent manner by altering the composition of the degradosome. Modulates RNA-binding and helicase activities of the degradosome. This is Regulator of ribonuclease activity A from Citrobacter koseri (strain ATCC BAA-895 / CDC 4225-83 / SGSC4696).